Consider the following 147-residue polypeptide: Protein LOL1 (147 aa).

Positions 1–38 are disordered; that stretch reads MVASRAPRSESPWLKKPMHGVSGSTAMASTPWSSMPPS. Positions 22–38 are enriched in polar residues; sequence SGSTAMASTPWSSMPPS. The segment at 47–77 is putative zinc finger; that stretch reads QLVCSGCRNLLMYPAGATSICCAVCGTVTAV.

It is found in the nucleus. Functionally, putative zinc finger that may be involved in programmed cell death and defense response. The polypeptide is Protein LOL1 (LOL1) (Oryza sativa subsp. japonica (Rice)).